The sequence spans 801 residues: Na(+)/H(+) antiporter subunit A1 (801 aa).

21 helical membrane passes run 4 to 25 (LHIAVILPLIFALIIPILYRFF), 30 to 49 (LGWFVLPVPIVIFIYMLTLI), 79 to 101 (LGLLFSLLISGIGSLVVLYSIGY), 108 to 127 (LGNFYCYLLLFMGAMLGVVL), 131 to 153 (VIILYLFWELTSFSSFLLISFWR), 166 to 188 (LIITVFGGLSLLGGIILLAIPTQ), 208 to 230 (FIFAMILIMIGAFTKSAQFPFYI), 243 to 265 (SAYLHSATMVKAGLYLIARMTPI), 270 to 289 (QGWIWTVTLVGLITLFWASL), 302 to 324 (AFSTVSQLGMIMAMLGIGAISYH), 339 to 361 (AAIFHLINHATFKGALFMITGAV), 373 to 395 (LGGLLTIMPISFTITVITALSMA), 429 to 451 (YLFPIIGIVGSVFTFVYSIKFIM), 472 to 494 (ILMLLSPAILATLVIVFGLFPGI), 526 to 548 (AFLSTLVIYILGILLIVTFSYWV), 589 to 611 (NNLVIIFGALILLTFVTVFSVPF), 621 to 641 (IRIFEVCIVILLLSAAFLILF), 646 to 668 (LFSIIMLSAVGYAVSVLFIFFKA), 672 to 694 (ALTQFVVESISTALFLLCFYHLP), 707 to 729 (LTNALIAGGVGLSVIIIGLIAYG), and 767 to 784 (LFESSVLGIAGLAVYTMI).

The protein belongs to the CPA3 antiporters (TC 2.A.63) subunit A family. As to quaternary structure, may form a heterooligomeric complex that consists of seven subunits: mnhA1, mnhB1, mnhC1, mnhD1, mnhE1, mnhF1 and mnhG1.

It localises to the cell membrane. With respect to regulation, na(+) extrusion is completely inhibited by the H(+) conductor carbonyl cyanide m-chlorophenylhydrazone (CCCP). In terms of biological role, mnh complex is a Na(+)/H(+) antiporter involved in Na(+) excretion. In Staphylococcus aureus (strain MRSA252), this protein is Na(+)/H(+) antiporter subunit A1 (mnhA1).